The sequence spans 307 residues: Membrane protein insertase YidC 2 (307 aa).

A signal peptide spans 1 to 23 (MKLTLNRILFSGLALSILFTLTG). C24 carries N-palmitoyl cysteine lipidation. C24 carries the S-diacylglycerol cysteine lipid modification. The next 5 membrane-spanning stretches (helical) occupy residues 58-78 (LGYGLAIIIVTIIVRTLILPL), 135-155 (LGGIGCLPLLIQMPFFSAMYF), 179-199 (VLTAIIAALYFFQSWLSMMAV), 209-225 (TMMYTMPIMMIFMSFSL), and 231-251 (LYWLVGGFFSIIQQLITTYLL). Positions 263–307 (YAKTPPKAYQSTSSRKDVTPSQNMEQANLPKKIKSNRNAGKQRKR) are disordered. Residues 271-288 (YQSTSSRKDVTPSQNMEQ) show a composition bias toward polar residues. The span at 293–307 (KKIKSNRNAGKQRKR) shows a compositional bias: basic residues.

The protein belongs to the OXA1/ALB3/YidC family. Type 2 subfamily.

The protein localises to the cell membrane. Its function is as follows. Required for the insertion and/or proper folding and/or complex formation of integral membrane proteins into the membrane. Involved in integration of membrane proteins that insert both dependently and independently of the Sec translocase complex, as well as at least some lipoproteins. The polypeptide is Membrane protein insertase YidC 2 (Streptococcus pyogenes serotype M18 (strain MGAS8232)).